Here is a 338-residue protein sequence, read N- to C-terminus: Glycerol-3-phosphate dehydrogenase [NAD(P)+] (338 aa).

NADPH contacts are provided by serine 13, tryptophan 14, and lysine 108. Sn-glycerol 3-phosphate is bound by residues lysine 108, glycine 139, and serine 141. Alanine 143 is a binding site for NADPH. Sn-glycerol 3-phosphate is bound by residues lysine 194, aspartate 247, serine 257, arginine 258, and asparagine 259. Lysine 194 (proton acceptor) is an active-site residue. Arginine 258 contacts NADPH. NADPH contacts are provided by valine 282 and glutamate 284.

The protein belongs to the NAD-dependent glycerol-3-phosphate dehydrogenase family.

The protein resides in the cytoplasm. It carries out the reaction sn-glycerol 3-phosphate + NAD(+) = dihydroxyacetone phosphate + NADH + H(+). The catalysed reaction is sn-glycerol 3-phosphate + NADP(+) = dihydroxyacetone phosphate + NADPH + H(+). The protein operates within membrane lipid metabolism; glycerophospholipid metabolism. Catalyzes the reduction of the glycolytic intermediate dihydroxyacetone phosphate (DHAP) to sn-glycerol 3-phosphate (G3P), the key precursor for phospholipid synthesis. In Streptococcus suis (strain 98HAH33), this protein is Glycerol-3-phosphate dehydrogenase [NAD(P)+].